The following is a 396-amino-acid chain: Acetate kinase (396 aa).

N7 contacts Mg(2+). K14 contributes to the ATP binding site. R89 is a substrate binding site. D146 serves as the catalytic Proton donor/acceptor. Residues 206–210, 280–282, and 328–332 contribute to the ATP site; these read HLGNG, DLR, and GIGEN. E382 is a Mg(2+) binding site.

Belongs to the acetokinase family. As to quaternary structure, homodimer. Mg(2+) is required as a cofactor. The cofactor is Mn(2+).

Its subcellular location is the cytoplasm. It carries out the reaction acetate + ATP = acetyl phosphate + ADP. It participates in metabolic intermediate biosynthesis; acetyl-CoA biosynthesis; acetyl-CoA from acetate: step 1/2. Functionally, catalyzes the formation of acetyl phosphate from acetate and ATP. Can also catalyze the reverse reaction. The sequence is that of Acetate kinase from Maridesulfovibrio salexigens (strain ATCC 14822 / DSM 2638 / NCIMB 8403 / VKM B-1763) (Desulfovibrio salexigens).